The following is a 222-amino-acid chain: Charged multivesicular body protein 3 (222 aa).

G2 is lipidated: N-myristoyl glycine. Residues 2–113 are intramolecular interaction with C-terminus; that stretch reads GLFGKTQEKP…LQKSTEVMKA (112 aa). The stretch at 22–54 forms a coiled coil; the sequence is KIRKEMRVVDRQIRDIQREEEKVKRSVKDAAKK. 2 important for autoinhibitory function regions span residues 59 to 64 and 168 to 169; these read VCVVLA and IL. Residues 149–222 are a coiled coil; it reads ESMDDQEEME…MQSRLATLRS (74 aa). The segment at 151 to 220 is intramolecular interaction with N-terminus; sequence MDDQEEMEEA…EAMQSRLATL (70 aa). The interval 151–222 is interaction with VPS4A; sequence MDDQEEMEEA…MQSRLATLRS (72 aa). K179 is covalently cross-linked (Glycyl lysine isopeptide (Lys-Gly) (interchain with G-Cter in ubiquitin)). A disordered region spans residues 180 to 222; that stretch reads APSKVTDALPEPEPSGAMAASDEEEEEEEALEAMQSRLATLRS. 3 interaction with STAMBP regions span residues 196–222, 203–207, and 221–222; these read AMAA…TLRS, EEEEE, and RS. S200 carries the phosphoserine modification. Over residues 200-210 the composition is skewed to acidic residues; sequence SDEEEEEEEAL. Residues 201 to 211 carry the MIT-interacting motif motif; that stretch reads DEEEEEEEALE.

The protein belongs to the SNF7 family. Probable core component of the endosomal sorting required for transport complex III (ESCRT-III). ESCRT-III components are thought to multimerize to form a flat lattice on the perimeter membrane of the endosome. Several assembly forms of ESCRT-III may exist that interact and act sequentially. Forms a metastable monomer in solution; its core structure (without part of the putative autoinhibitory C-terminal acidic region) oligomerizes into a flat lattice via two different dimerization interfaces. In vitro, heteromerizes with CHMP2A (but not CHMP4) to form helical tubular structures that expose membrane-interacting sites on the outside whereas VPS4B can associate on the inside of the tubule. May interact with IGFBP7; the relevance of such interaction however remains unclear. Interacts with CHMP2A. Interacts with CHMP4A; the interaction requires the release of CHMP4A autoinhibition. Interacts with VPS4A. Interacts with STAMBP; the interaction appears to relieve the autoinhibition of CHMP3. Interacts with VTA1.

The protein localises to the cytoplasm. Its subcellular location is the cytosol. It localises to the membrane. It is found in the endosome. The protein resides in the late endosome membrane. In terms of biological role, probable core component of the endosomal sorting required for transport complex III (ESCRT-III) which is involved in multivesicular bodies (MVBs) formation and sorting of endosomal cargo proteins into MVBs. MVBs contain intraluminal vesicles (ILVs) that are generated by invagination and scission from the limiting membrane of the endosome and mostly are delivered to lysosomes enabling degradation of membrane proteins, such as stimulated growth factor receptors, lysosomal enzymes and lipids. The MVB pathway appears to require the sequential function of ESCRT-O, -I,-II and -III complexes. ESCRT-III proteins mostly dissociate from the invaginating membrane before the ILV is released. The ESCRT machinery also functions in topologically equivalent membrane fission events, such as the terminal stages of cytokinesis and the budding of enveloped viruses (lentiviruses). ESCRT-III proteins are believed to mediate the necessary vesicle extrusion and/or membrane fission activities, possibly in conjunction with the AAA ATPase VPS4. Selectively binds to phosphatidylinositol 3,5-bisphosphate PtdIns(3,5)P2 and PtdIns(3,4)P2 in preference to other phosphoinositides tested. Involved in late stages of cytokinesis. Plays a role in endosomal sorting/trafficking of EGF receptor. This Macaca fascicularis (Crab-eating macaque) protein is Charged multivesicular body protein 3 (CHMP3).